Here is a 437-residue protein sequence, read N- to C-terminus: MERECEKSVVVAVVTEPRFTQRYRDYLEKQKLLDRQYRVEKLRDGTVALPVLAETLSEHHLQELKNRVAPGSTCKLTQLLDPLPSKKARVCSPAQRLCLEVRRWVEDRGVTWSTELEADLPRSWQRHGDLMLLSEDCFQATQWKRLEPELWETVASALGVQRLAKRGRVLPDGTRTPTVTLLLGDHGWVEHVDNGIRYKFDVTQCMFSFGNITEKLRVASLSCAGEVLVDLYAGIGYFTLPFLVHAGAAFVHACEWNPHAVVALRKNLEINGVADRCQIHFGDNRKLKLSNTADRVNLGLIPSSEEGWPIACQVLRKDVGGILHIHQNVESFSGKNPQPPGSSNMEKKHWPHPQKITTDKQGNRTTGSCMGEMSSASKPEWQRWAESAESQIASLLHQVHGKPWRTRILHVHPVKSYAPHVDHIVLDLECRPCPLVG.

S-adenosyl-L-methionine is bound by residues Ser208, Lys215, Glu255, and 283–284 (DN). A compositionally biased stretch (polar residues) spans 331-344 (SFSGKNPQPPGSSN). The disordered stretch occupies residues 331-374 (SFSGKNPQPPGSSNMEKKHWPHPQKITTDKQGNRTTGSCMGEMS).

This sequence belongs to the class I-like SAM-binding methyltransferase superfamily. TRM5/TYW2 family.

It carries out the reaction 4-demethylwyosine(37) in tRNA(Phe) + S-adenosyl-L-methionine = 4-demethyl-7-[(3S)-3-amino-3-carboxypropyl]wyosine(37) in tRNA(Phe) + S-methyl-5'-thioadenosine + H(+). The protein operates within tRNA modification; wybutosine-tRNA(Phe) biosynthesis. Functionally, S-adenosyl-L-methionine-dependent transferase that acts as a component of the wybutosine biosynthesis pathway. Wybutosine is a hyper modified guanosine with a tricyclic base found at the 3'-position adjacent to the anticodon of eukaryotic phenylalanine tRNA. Catalyzes the transfer of the alpha-amino-alpha-carboxypropyl (acp) group from S-adenosyl-L-methionine to the C-7 position of 4-demethylwyosine (imG-14) to produce wybutosine-86. In Rattus norvegicus (Rat), this protein is tRNA wybutosine-synthesizing protein 2 homolog (Trmt12).